Here is a 240-residue protein sequence, read N- to C-terminus: Glutathione-independent glyoxalase hsp3102 (240 aa).

Active-site residues include C141, H142, and E175.

This sequence belongs to the peptidase C56 family. HSP31-like subfamily.

It localises to the cytoplasm. The protein localises to the nucleus. It catalyses the reaction methylglyoxal + H2O = (R)-lactate + H(+). Its function is as follows. Catalyzes the conversion of methylglyoxal (MG) to D-lactate in a single glutathione (GSH)-independent step. May play a role in detoxifying endogenously produced glyoxals. Involved in protection against reactive oxygen species (ROS). The protein is Glutathione-independent glyoxalase hsp3102 of Schizosaccharomyces pombe (strain 972 / ATCC 24843) (Fission yeast).